The primary structure comprises 559 residues: Protein pp71 (559 aa).

At C218 the chain carries S-nitrosocysteine; by host. T223 carries the phosphothreonine modification. Disordered regions lie at residues 404-440 (EFLP…TPLS) and 530-559 (SSTL…RPRI). The segment covering 415–430 (TEEEEEEEEEDDEDDL) has biased composition (acidic residues). 2 stretches are compositionally biased toward low complexity: residues 431-440 (SSTPTPTPLS) and 543-559 (PIST…RPRI).

It belongs to the herpesviridae pp71 family. As to quaternary structure, interacts with the host protein DAXX; this interaction takes place at ND10 and induces the reversal of DAXX-mediated repression of viral transcription. Interacts with UL35. Interacts with host TMEM173/STING1; this interaction inhibits the cGAS/STING pathway. Interacts with host RB1; this interaction mediates RB1 proteasomal degradation. S-nitrosylation limits ability to undermine the cGAS/STING antiviral pathway.

It is found in the virion tegument. Its subcellular location is the host nucleus. The protein resides in the host endoplasmic reticulum. Its function is as follows. Stimulates viral immediate-early (IE) transcription. Plays a role in the inhibition of the host innate repsonse by targeting STING1 and thus the cGAS-STING pathway. Also counteracts host DAXX-mediated repression of viral transcription. Displaces a DAXX-binding protein, ATRX, from nuclear domain 10 sites (ND10) shortly after infection. Increases the basal level of SUMOylated DAXX in infected cells. Stimulates quiescent cells to re-enter the cell cycle, proceed through G1 and enter the S phase. Interacts with hypophosphorylated forms of RB1 and induces their degradation by the proteasome without involving ubiquitin conjugation. The sequence is that of Protein pp71 (UL82) from Human cytomegalovirus (strain AD169) (HHV-5).